The sequence spans 440 residues: Xaa-Pro dipeptidase (440 aa).

Residues Asp-241, Asp-252, His-333, Glu-378, and Glu-417 each contribute to the Mn(2+) site.

It belongs to the peptidase M24B family. Bacterial-type prolidase subfamily. It depends on Mn(2+) as a cofactor.

It carries out the reaction Xaa-L-Pro dipeptide + H2O = an L-alpha-amino acid + L-proline. Functionally, splits dipeptides with a prolyl residue in the C-terminal position. This chain is Xaa-Pro dipeptidase, found in Glaesserella parasuis serovar 5 (strain SH0165) (Haemophilus parasuis).